A 477-amino-acid chain; its full sequence is Probable cytosol aminopeptidase (477 aa).

Mn(2+) is bound by residues lysine 245 and aspartate 250. Lysine 257 is an active-site residue. 3 residues coordinate Mn(2+): aspartate 268, aspartate 327, and glutamate 329. Arginine 331 is a catalytic residue.

The protein belongs to the peptidase M17 family. Mn(2+) is required as a cofactor.

It is found in the cytoplasm. The enzyme catalyses Release of an N-terminal amino acid, Xaa-|-Yaa-, in which Xaa is preferably Leu, but may be other amino acids including Pro although not Arg or Lys, and Yaa may be Pro. Amino acid amides and methyl esters are also readily hydrolyzed, but rates on arylamides are exceedingly low.. It catalyses the reaction Release of an N-terminal amino acid, preferentially leucine, but not glutamic or aspartic acids.. Functionally, presumably involved in the processing and regular turnover of intracellular proteins. Catalyzes the removal of unsubstituted N-terminal amino acids from various peptides. This chain is Probable cytosol aminopeptidase, found in Exiguobacterium sibiricum (strain DSM 17290 / CCUG 55495 / CIP 109462 / JCM 13490 / 255-15).